The following is a 431-amino-acid chain: O-methyltransferase xanE (431 aa).

Asp283 serves as a coordination point for S-adenosyl-L-methionine. Residue His330 is the Proton acceptor of the active site.

Belongs to the class I-like SAM-binding methyltransferase superfamily. Cation-independent O-methyltransferase family.

It functions in the pathway secondary metabolite biosynthesis. O-methyltransferase; part of the gene cluster that mediates the biosynthesis of the isocyanide xanthocillin and its derivatives. The first step of the pathway consists in the conversion of tyrosine into a vinyl-isonitrile intermediate by the isocyanide synthase xanB. Subsequent oxidative dimerization of this intermediate to form xanthocillin may involve the cytochrome P450 monooxygenase xanG, whose expression is coregulated with that of XanB. Xanthocillin can be further modified by the isonitrile hydratase-like protein xanA which introduces N-formyl groups and the methyltransferase xanE which introduces methyl groups, leading to the production of several derivatives including fumiformamide. Finally, fumiformamide can be subject to both oxidative and reductive cyclization to yield melanocins E and F, respectively. The polypeptide is O-methyltransferase xanE (Aspergillus fumigatus (strain ATCC MYA-4609 / CBS 101355 / FGSC A1100 / Af293) (Neosartorya fumigata)).